Reading from the N-terminus, the 550-residue chain is MFCVQCEQTIRTPAGNGCSYAQGMCGKTAETSDLQDLLIAALQGLSAWAVKAREYGIINHDVDSFAPRAFFSTLTNVNFDSPRIVGYAREAIALREALKAQCLAVDANARVDNPMANLQLVSDDLGELQRQAAEFTPNKDKAAIGENILGLRLLCLYGLKGAAAYMEHAHVLGQYDNDIYAQYHKIMAWLGTWPADMNALLECSMEIGQMNFKVMSILDAGETGKYGHPTPTQVNVKATAGKCILISGHDLKDLYNLLEQTEGTGVNVYTHGEMLPAHGYPELRKFKHLVGNYGSGWQNQQVEFARFPGPIVMTSNCIIDPTVGAYDDRIWTRSIVGWPGVRHLDGDDFSAVITQAQQMAGFPYSEIPHLITVGFGRQTLLGAADTLIDLVSREKLRHIFLLGGCDGARGERHYFTDFATSVPDDCLILTLACGKYRFNKLEFGDIEGLPRLVDAGQCNDAYSAIILAVTLAEKLGCGVNDLPLSMVLSWFEQKAIVILLTLLSLGVKNIVTGPTAPGFLTPDLLAVLNEKFGLRSITTVEEDMKQLLSA.

The [2Fe-2S] cluster site is built by C3, C6, C18, and C25. Positions 249, 273, 317, 405, 433, 458, 492, and 494 each coordinate hybrid [4Fe-2O-2S] cluster. Cysteine persulfide is present on C405.

The protein belongs to the HCP family. [2Fe-2S] cluster serves as cofactor. It depends on hybrid [4Fe-2O-2S] cluster as a cofactor.

The protein resides in the cytoplasm. The catalysed reaction is A + NH4(+) + H2O = hydroxylamine + AH2 + H(+). In terms of biological role, catalyzes the reduction of hydroxylamine to form NH(3) and H(2)O. The protein is Hydroxylamine reductase of Escherichia coli (strain SE11).